Consider the following 232-residue polypeptide: Ribose-5-phosphate isomerase A (232 aa).

Substrate contacts are provided by residues 28-31, 83-86, and 96-99; these read TGST, DGAD, and KGGG. The Proton acceptor role is filled by E105. K123 provides a ligand contact to substrate.

The protein belongs to the ribose 5-phosphate isomerase family. As to quaternary structure, homodimer.

The catalysed reaction is aldehydo-D-ribose 5-phosphate = D-ribulose 5-phosphate. The protein operates within carbohydrate degradation; pentose phosphate pathway; D-ribose 5-phosphate from D-ribulose 5-phosphate (non-oxidative stage): step 1/1. Catalyzes the reversible conversion of ribose-5-phosphate to ribulose 5-phosphate. This is Ribose-5-phosphate isomerase A from Rhizobium etli (strain CIAT 652).